Consider the following 1084-residue polypeptide: Probable sucrose-phosphate synthase 1 (1084 aa).

The span at 25-46 (GGGGGGGGGGGGGGGGGGGGGV) shows a compositional bias: gly residues. The interval 25–61 (GGGGGGGGGGGGGGGGGGGGGVDPRSPAAGAASPRGP) is disordered. Residues 48–61 (PRSPAAGAASPRGP) are compositionally biased toward low complexity.

Belongs to the glycosyltransferase 1 family. Homodimer or homotetramer. Expressed in leaves mesophyll cells, scutellum of germinating seedlings and pollen of immature inflorescences.

The catalysed reaction is beta-D-fructose 6-phosphate + UDP-alpha-D-glucose = sucrose 6(F)-phosphate + UDP + H(+). It functions in the pathway glycan biosynthesis; sucrose biosynthesis; sucrose from D-fructose 6-phosphate and UDP-alpha-D-glucose: step 1/2. Activity is regulated by phosphorylation and moderated by concentration of metabolites and light. Its function is as follows. Plays a role in photosynthetic sucrose synthesis by catalyzing the rate-limiting step of sucrose biosynthesis from UDP-glucose and fructose- 6-phosphate. Involved in the regulation of carbon partitioning in the leaves of plants. May regulate the synthesis of sucrose and therefore play a major role as a limiting factor in the export of photoassimilates out of the leaf. Plays a role for sucrose availability that is essential for plant growth and fiber elongation. This is Probable sucrose-phosphate synthase 1 (SPS1) from Oryza sativa subsp. indica (Rice).